We begin with the raw amino-acid sequence, 114 residues long: PDZK1-interacting protein 1 (114 aa).

At 1 to 28 (MSALSLLILGLLTAVPPASCQQGLGNLQ) the chain is on the extracellular side. A helical transmembrane segment spans residues 29–51 (PWMQGLIAVAVFLVLVAIAFAVN). Residues 52-114 (HFWCQEEPEP…EEGKVRSTPM (63 aa)) lie on the Cytoplasmic side of the membrane. Ser-85 carries the phosphoserine modification. Positions 94–114 (EHENAYENVPEEEGKVRSTPM) are disordered. Residues 105–114 (EEGKVRSTPM) show a composition bias toward basic and acidic residues.

It belongs to the PDZK1-interacting protein 1/SMIM24 family. As to quaternary structure, forms a heterodimer (via N-terminal transmembrane helix) with SLC5A2/SGLT2 (via TM13); this interaction enhances SLC5A2 transporter activity. Interacts with PDZK1.

It localises to the apical cell membrane. Its function is as follows. Auxiliary protein of electrogenic Na(+)-coupled sugar symporter SLC5A2/SGLT2 and SLC5A1/SGLT1. Essential for the transporter activity of SLC5A2/SGLT2 but not SLC5A1/SGLT1. The sequence is that of PDZK1-interacting protein 1 from Homo sapiens (Human).